A 185-amino-acid polypeptide reads, in one-letter code: Small ribosomal subunit protein bS6 (185 aa).

Residues 115-141 show a composition bias toward basic and acidic residues; it reads AAQKAAAEKAEAARLEAEKAAEEEAAK. The segment at 115 to 185 is disordered; the sequence is AAQKAAAEKA…EEPKSDEEDA (71 aa). The span at 142–169 shows a compositional bias: low complexity; it reads AAEAQAKEAPAAEAPAEEAPAAEAPAEA. A compositionally biased stretch (acidic residues) spans 170–185; it reads PAEEPAEEPKSDEEDA.

This sequence belongs to the bacterial ribosomal protein bS6 family.

Functionally, binds together with bS18 to 16S ribosomal RNA. The polypeptide is Small ribosomal subunit protein bS6 (Desulfatibacillum aliphaticivorans).